The following is a 494-amino-acid chain: Solute carrier family 2, facilitated glucose transporter member 3 (494 aa).

Residues 1-10 (MGTTKVTPYL) are Cytoplasmic-facing. The helical transmembrane segment at 11–32 (IFATSVAAIGSFQFGYNTGVIN) threads the bilayer. Topologically, residues 33–64 (APEMIIRDFLNYTLDEKLDEPPSRLLLTNLWS) are extracellular. Asparagine 43 is a glycosylation site (N-linked (GlcNAc...) asparagine). Residues 65 to 84 (LSVAIFSVGGMIGSFSVGLF) form a helical membrane-spanning segment. The Cytoplasmic portion of the chain corresponds to 85 to 89 (NRFGR). The chain crosses the membrane as a helical span at residues 90–110 (RNSMLIVNLLAVIGGCLMGFC). The Extracellular segment spans residues 111 to 117 (KISESVE). A helical transmembrane segment spans residues 118–141 (MLILGRLVIGVFCGLCTGFVPMYI). Topologically, residues 142–152 (GEISPTALRGA) are cytoplasmic. Residues 153 to 173 (FGTLNQLGIVIGILVAQIFGL) form a helical membrane-spanning segment. Position 158 (glutamine 158) interacts with D-glucose. The Extracellular portion of the chain corresponds to 174 to 182 (EIILGSEVL). The helical transmembrane segment at 183–203 (WPVLLGFTIIPAILQSAALPF) threads the bilayer. The Cytoplasmic segment spans residues 204-268 (CPESPRFLLI…LFRAPSYRQP (65 aa)). Threonine 231 is modified (phosphothreonine). The chain crosses the membrane as a helical span at residues 269 to 289 (IIISIVLQLSQQLSGINAVFY). The tract at residues 276–278 (QLS) is important for selectivity against fructose. D-glucose-binding positions include 279–280 (QQ) and asparagine 285. The Extracellular portion of the chain corresponds to 290-303 (YSTGIFKDAGVKEP). The helical transmembrane segment at 304–324 (IYATIGAGVVNTIFTIVSVFL) threads the bilayer. Residue asparagine 314 coordinates D-glucose. The Cytoplasmic portion of the chain corresponds to 325–330 (VERAGR). A helical membrane pass occupies residues 331-351 (RTLHLIGLGGMALCSVLMTVS). The Extracellular portion of the chain corresponds to 352-362 (LLLKDKYDTMS). A helical membrane pass occupies residues 363–388 (LVCIAAILIYVAFFEIGPGPIPWFIV). D-glucose contacts are provided by glutamate 377 and tryptophan 385. Residues 389–398 (AELFSQGPRP) lie on the Cytoplasmic side of the membrane. A helical transmembrane segment spans residues 399 to 419 (AAMAVAGCSNWTSNFLVGLLF). Topologically, residues 420-428 (PSAAYYLGA) are extracellular. The helical transmembrane segment at 429–449 (YVFVIFAVFLVAFFIFTFFKV) threads the bilayer. Residues 450 to 494 (PETRGRTFEDITRAFEGQAAEANKLGKGPTMEMNSIQPIETTTHV) lie on the Cytoplasmic side of the membrane. Serine 484 is modified (phosphoserine). Position 491 is a phosphothreonine (threonine 491).

It belongs to the major facilitator superfamily. Sugar transporter (TC 2.A.1.1) family. Glucose transporter subfamily. In terms of assembly, interacts with SMIM43; the interaction may promote SLC2A3-mediated glucose transport to meet the energy needs of mesendoderm differentiation. In terms of tissue distribution, detected in stomach, placenta, lung and brain.

The protein resides in the cell membrane. The protein localises to the perikaryon. Its subcellular location is the cell projection. The catalysed reaction is D-glucose(out) = D-glucose(in). The enzyme catalyses D-galactose(in) = D-galactose(out). Deoxyglucose transport is inhibited by D-glucose, D-galactose and maltose. Galactose transport is inhibited by D-glucose and maltose. Its function is as follows. Facilitative glucose transporter. Can also mediate the uptake of various other monosaccharides across the cell membrane. Mediates the uptake of glucose, 2-deoxyglucose, galactose, mannose, xylose and fucose, and probably also dehydroascorbate. Does not mediate fructose transport. Required for mesendoderm differentiation. The protein is Solute carrier family 2, facilitated glucose transporter member 3 of Oryctolagus cuniculus (Rabbit).